A 212-amino-acid chain; its full sequence is Prolactin-3C1 (212 aa).

The N-terminal stretch at 1–29 (MQLSLTQARTWKGLFLLVSCMFLWVYVTA) is a signal peptide. A disulfide bridge connects residues C80 and C188. N100 is a glycosylation site (N-linked (GlcNAc...) asparagine).

This sequence belongs to the somatotropin/prolactin family. As to expression, expressed exclusively in decidua.

The protein localises to the secreted. The protein is Prolactin-3C1 (Prl3c1) of Mus musculus (Mouse).